A 373-amino-acid chain; its full sequence is Enoyl-[acyl-carrier-protein] reductase, mitochondrial (373 aa).

Residues 1–53 constitute a mitochondrion transit peptide; the sequence is MLVSQRVTGARARAPQLAGLLEAWYRHGRTTSSYSALSEPSRVRALVYGNHGD. Residue lysine 61 is modified to N6-acetyllysine; alternate. Lysine 61 carries the post-translational modification N6-succinyllysine; alternate. The Proton donor role is filled by tyrosine 94. Residues asparagine 167, 193-196, and 216-218 each bind NADP(+); these read NSGV and RDR. Lysine 252 and lysine 267 each carry N6-acetyllysine; alternate. Lysine 252 and lysine 267 each carry N6-succinyllysine; alternate. NADP(+) contacts are provided by residues 285–288 and 310–312; these read YGGM and FWL. Lysine 316 is subject to N6-succinyllysine. Lysine 368 serves as a coordination point for NADP(+).

The protein belongs to the zinc-containing alcohol dehydrogenase family. Quinone oxidoreductase subfamily. Homodimer. In terms of tissue distribution, expressed in Purkinje cells (at protein level).

It localises to the mitochondrion. It carries out the reaction a 2,3-saturated acyl-[ACP] + NADP(+) = a (2E)-enoyl-[ACP] + NADPH + H(+). It catalyses the reaction (2E)-butenoyl-[ACP] + NADPH + H(+) = butanoyl-[ACP] + NADP(+). The enzyme catalyses (2E)-hexenoyl-[ACP] + NADPH + H(+) = hexanoyl-[ACP] + NADP(+). The catalysed reaction is (2E)-octenoyl-[ACP] + NADPH + H(+) = octanoyl-[ACP] + NADP(+). It carries out the reaction (2E)-decenoyl-[ACP] + NADPH + H(+) = decanoyl-[ACP] + NADP(+). It catalyses the reaction (2E)-dodecenoyl-[ACP] + NADPH + H(+) = dodecanoyl-[ACP] + NADP(+). The enzyme catalyses (2E)-tetradecenoyl-[ACP] + NADPH + H(+) = tetradecanoyl-[ACP] + NADP(+). The catalysed reaction is (2E)-hexadecenoyl-[ACP] + NADPH + H(+) = hexadecanoyl-[ACP] + NADP(+). Catalyzes the NADPH-dependent reduction of trans-2-enoyl thioesters in mitochondrial fatty acid synthesis (fatty acid synthesis type II). Fatty acid chain elongation in mitochondria uses acyl carrier protein (ACP) as an acyl group carrier, but the enzyme accepts both ACP and CoA thioesters as substrates in vitro. Displays a preference for medium-chain over short- and long-chain substrates. May provide the octanoyl chain used for lipoic acid biosynthesis, regulating protein lipoylation and mitochondrial respiratory activity particularly in Purkinje cells. Involved in iron homeostasis; affecting Fe-S cluster assembly and ceramide metabolism. Required for proper morphology and bioenergetic functions of mitochondria. Required for maintenance of neurons. The chain is Enoyl-[acyl-carrier-protein] reductase, mitochondrial (Mecr) from Mus musculus (Mouse).